We begin with the raw amino-acid sequence, 98 residues long: NADH-ubiquinone oxidoreductase chain 4L (98 aa).

3 helical membrane passes run 2–22 (TSAFLNLTMAFTLSLLGTFMF), 26–46 (LMSTLLCLEGMMLSLFVMTST), and 59–79 (IPITILVFAACEAAVGLALLV).

It belongs to the complex I subunit 4L family. In terms of assembly, core subunit of respiratory chain NADH dehydrogenase (Complex I) which is composed of 45 different subunits.

It is found in the mitochondrion inner membrane. It carries out the reaction a ubiquinone + NADH + 5 H(+)(in) = a ubiquinol + NAD(+) + 4 H(+)(out). Its function is as follows. Core subunit of the mitochondrial membrane respiratory chain NADH dehydrogenase (Complex I) which catalyzes electron transfer from NADH through the respiratory chain, using ubiquinone as an electron acceptor. Part of the enzyme membrane arm which is embedded in the lipid bilayer and involved in proton translocation. In Rattus norvegicus (Rat), this protein is NADH-ubiquinone oxidoreductase chain 4L.